Here is a 602-residue protein sequence, read N- to C-terminus: Aspartate--tRNA(Asp/Asn) ligase (602 aa).

E176 serves as a coordination point for L-aspartate. The tract at residues 200 to 203 (QQFK) is aspartate. Residues R222 and H452 each contribute to the L-aspartate site. 222 to 224 (RDE) lines the ATP pocket. E490 lines the ATP pocket. R497 contributes to the L-aspartate binding site. 542–545 (GIDR) serves as a coordination point for ATP.

This sequence belongs to the class-II aminoacyl-tRNA synthetase family. Type 1 subfamily. Homodimer.

It localises to the cytoplasm. The enzyme catalyses tRNA(Asx) + L-aspartate + ATP = L-aspartyl-tRNA(Asx) + AMP + diphosphate. Functionally, aspartyl-tRNA synthetase with relaxed tRNA specificity since it is able to aspartylate not only its cognate tRNA(Asp) but also tRNA(Asn). Reaction proceeds in two steps: L-aspartate is first activated by ATP to form Asp-AMP and then transferred to the acceptor end of tRNA(Asp/Asn). This is Aspartate--tRNA(Asp/Asn) ligase from Rickettsia africae (strain ESF-5).